A 520-amino-acid polypeptide reads, in one-letter code: Ribonuclease Y (520 aa).

Residues 1 to 21 (MDIITIIIAVIAGIGGGFGIS) form a helical membrane-spanning segment. Positions 210-276 (CVSVFNIESD…RLALHKLVTD (67 aa)) constitute a KH domain. Positions 336-429 (LLQHSREVSK…VQVCDAISGA (94 aa)) constitute an HD domain.

Belongs to the RNase Y family.

The protein resides in the cell membrane. Its function is as follows. Endoribonuclease that initiates mRNA decay. This Flavobacterium psychrophilum (strain ATCC 49511 / DSM 21280 / CIP 103535 / JIP02/86) protein is Ribonuclease Y.